The sequence spans 150 residues: Small ribosomal subunit protein uS11 (150 aa).

It belongs to the universal ribosomal protein uS11 family. As to quaternary structure, part of the 30S ribosomal subunit. Interacts with proteins S7 and S18. Binds to IF-3.

In terms of biological role, located on the platform of the 30S subunit, it bridges several disparate RNA helices of the 16S rRNA. Forms part of the Shine-Dalgarno cleft in the 70S ribosome. This Pelagibacter ubique (strain HTCC1062) protein is Small ribosomal subunit protein uS11.